The chain runs to 348 residues: Rhodopsin (348 aa).

Residues 1 to 33 (TEGPYFYIPMVNTTGIVRSPYEYPQYYLVNPAA) are Extracellular-facing. A glycan (N-linked (GlcNAc...) asparagine) is linked at asparagine 12. The helical transmembrane segment at 34–58 (YAMLGAYMFFLIIVGFPVNFMTLYV) threads the bilayer. Residues 59 to 70 (TLEHKKLRTPLN) are Cytoplasmic-facing. The helical transmembrane segment at 71–93 (YILLNLAVADLFMVIGGFTTTIY) threads the bilayer. Topologically, residues 94-107 (TSMHGYFVLGRLGC) are extracellular. Cysteine 107 and cysteine 184 are disulfide-bonded. A helical transmembrane segment spans residues 108-130 (NIEGFFATLGGMISLWSLAVLAI). Residues 131–133 (ERW) carry the 'Ionic lock' involved in activated form stabilization motif. The Cytoplasmic portion of the chain corresponds to 131 to 149 (ERWVVVCKPISNFRFGENH). A helical transmembrane segment spans residues 150-170 (AIMGVSLTWAMALACTVPPLV). The Extracellular segment spans residues 171 to 199 (GWSRYIPEGMQCSCGIDYYTRAEGFNNES). The N-linked (GlcNAc...) asparagine glycan is linked to asparagine 197. Residues 200–221 (FVLYMFFCHFTIPLTIIFFCYG) form a helical membrane-spanning segment. Over 222–249 (RLLCAVKEAAAAQQESETTQRAEREVTR) the chain is Cytoplasmic. Residues 250 to 271 (MVIIMVIGFLICWLPYASVAWF) form a helical membrane-spanning segment. Over 272–283 (IFTHQGSEFGPL) the chain is Extracellular. Residues 284 to 305 (FMTIPAFFAKSSSIYNPMIYIC) form a helical membrane-spanning segment. Lysine 293 carries the post-translational modification N6-(retinylidene)lysine. Residues 306 to 348 (MNKQFRHCMITTLFCGKNPFEGEEEGASSTKTEASSASSVSPA) are Cytoplasmic-facing. Residue cysteine 320 is the site of S-palmitoyl cysteine attachment. The tract at residues 327-348 (GEEEGASSTKTEASSASSVSPA) is disordered. Low complexity predominate over residues 332-348 (ASSTKTEASSASSVSPA).

This sequence belongs to the G-protein coupled receptor 1 family. Opsin subfamily. Phosphorylated on some or all of the serine and threonine residues present in the C-terminal region. Post-translationally, contains one covalently linked retinal chromophore.

The protein localises to the membrane. It localises to the cell projection. The protein resides in the cilium. It is found in the photoreceptor outer segment. Functionally, photoreceptor required for image-forming vision at low light intensity. While most salt water fish species use retinal as chromophore, most freshwater fish use 3-dehydroretinal, or a mixture of retinal and 3-dehydroretinal. Light-induced isomerization of 11-cis to all-trans retinal triggers a conformational change that activates signaling via G-proteins. Subsequent receptor phosphorylation mediates displacement of the bound G-protein alpha subunit by arrestin and terminates signaling. The polypeptide is Rhodopsin (rho) (Sargocentron microstoma (Smallmouth squirrelfish)).